Consider the following 465-residue polypeptide: Chromosomal replication initiator protein DnaA (465 aa).

Positions methionine 1–valine 84 are domain I, interacts with DnaA modulators. The tract at residues valine 84–serine 128 is domain II. A domain III, AAA+ region region spans residues asparagine 129–alanine 345. ATP-binding residues include glycine 173, glycine 175, lysine 176, and threonine 177. Residues asparagine 346 to serine 465 form a domain IV, binds dsDNA region.

The protein belongs to the DnaA family. As to quaternary structure, oligomerizes as a right-handed, spiral filament on DNA at oriC.

Its subcellular location is the cytoplasm. In terms of biological role, plays an essential role in the initiation and regulation of chromosomal replication. ATP-DnaA binds to the origin of replication (oriC) to initiate formation of the DNA replication initiation complex once per cell cycle. Binds the DnaA box (a 9 base pair repeat at the origin) and separates the double-stranded (ds)DNA. Forms a right-handed helical filament on oriC DNA; dsDNA binds to the exterior of the filament while single-stranded (ss)DNA is stabiized in the filament's interior. The ATP-DnaA-oriC complex binds and stabilizes one strand of the AT-rich DNA unwinding element (DUE), permitting loading of DNA polymerase. After initiation quickly degrades to an ADP-DnaA complex that is not apt for DNA replication. Binds acidic phospholipids. This is Chromosomal replication initiator protein DnaA from Pectobacterium atrosepticum (strain SCRI 1043 / ATCC BAA-672) (Erwinia carotovora subsp. atroseptica).